Reading from the N-terminus, the 117-residue chain is Elafin (117 aa).

Positions Met-1–Ala-22 are cleaved as a signal peptide. Positions Ala-23–Lys-60 are excised as a propeptide. SVP-1 clotting repeat units follow at residues Val-29–Lys-54 and Gly-55–Lys-72. A 2 X tandem repeats of SVP-1 like motif region spans residues Val-29–Lys-72. Residues Val-69–Gln-117 form the WAP domain. 4 disulfide bridges follow: Cys-76/Cys-105, Cys-83/Cys-109, Cys-92/Cys-104, and Cys-98/Cys-113.

The protein localises to the secreted. Neutrophil and pancreatic elastase-specific inhibitor of skin. It may prevent elastase-mediated tissue proteolysis. Has been shown to inhibit the alpha-4-beta-2/CHRNA2-CHRNB2 nicotinic acetylcholine receptor and to produce a weak inhibition on Kv11.1/KCNH2/ERG1 and on the transient receptor potential cation channel subfamily V member 1 (TRPV1). This is Elafin (PI3) from Homo sapiens (Human).